Reading from the N-terminus, the 206-residue chain is Large ribosomal subunit protein uL4 (206 aa).

The segment at 63–93 (MYKQKGTGRARHHSARAPQFRGGGKAHGPVV) is disordered. The segment covering 64-77 (YKQKGTGRARHHSA) has biased composition (basic residues).

It belongs to the universal ribosomal protein uL4 family. In terms of assembly, part of the 50S ribosomal subunit.

One of the primary rRNA binding proteins, this protein initially binds near the 5'-end of the 23S rRNA. It is important during the early stages of 50S assembly. It makes multiple contacts with different domains of the 23S rRNA in the assembled 50S subunit and ribosome. Its function is as follows. Forms part of the polypeptide exit tunnel. The chain is Large ribosomal subunit protein uL4 from Rhizobium meliloti (strain 1021) (Ensifer meliloti).